Here is a 413-residue protein sequence, read N- to C-terminus: Heparan-sulfate 6-O-sulfotransferase 1-A (413 aa).

Residues 9 to 15 (MVERSSK) lie on the Cytoplasmic side of the membrane. The chain crosses the membrane as a helical; Signal-anchor for type II membrane protein span at residues 16 to 36 (FLFIVVGSVLFMLILYQYVAP). Residues 37–413 (GMMNFGSPHG…DYMNHIINRW (377 aa)) are Lumenal-facing. 92–100 (HIQKTGGTT) provides a ligand contact to 3'-phosphoadenylyl sulfate. Residues 122–123 (KK), R139, W144, and H149 contribute to the substrate site. The active-site Proton acceptor is H149. R183 and S191 together coordinate 3'-phosphoadenylyl sulfate. Residues H195 and W202 each coordinate substrate. N262 carries an N-linked (GlcNAc...) asparagine glycan. 315-317 (MQY) lines the 3'-phosphoadenylyl sulfate pocket. N-linked (GlcNAc...) asparagine glycosylation is present at N318. 3'-phosphoadenylyl sulfate is bound at residue 321-322 (RA). An N-linked (GlcNAc...) asparagine glycan is attached at N329. A disordered region spans residues 374-401 (PLFPFRRTSSSDSTFRDDAPESEGSRLP).

This sequence belongs to the sulfotransferase 6 family. During somitogenesis, first expressed in polster and presumptive forebrain. During mid-somitogenesis, expressed in eye, hindbrain and anterior spinal cord. During late somitogenesis, strong expression in eye and hindbrain, decreased levels in midbrain and anterior spinal cord. At 24 hours post-fertilization (hpf), expressed in neural retina and lens, brain and anterior spinal cord. At 36 hpf, retinal expression is confined to the ciliary marginal zone and there is strong expression in tectum, rhombomeres and otic vesicle. At 48 hpf, expressed in retinal ganglion cells and in tectum, rhombomeres and pectoral fin. Not detected in the vasculature during embryogenesis.

Its subcellular location is the membrane. The enzyme catalyses alpha-D-glucosaminyl-[heparan sulfate](n) + 3'-phosphoadenylyl sulfate = 6-sulfo-alpha-D-glucosaminyl-[heparan sulfate](n) + adenosine 3',5'-bisphosphate + H(+). In terms of biological role, 6-O-sulfation enzyme which catalyzes the transfer of sulfate from 3'-phosphoadenosine 5'-phosphosulfate (PAPS) to position 6 of the N-sulfoglucosamine residue (GlcNS) of heparan sulfate. This chain is Heparan-sulfate 6-O-sulfotransferase 1-A, found in Danio rerio (Zebrafish).